The following is a 254-amino-acid chain: Insulin-like growth factor-binding protein 4 (254 aa).

An N-terminal signal peptide occupies residues 1–21 (MLPFGLVAALLLAAGPRPSLG). Residues 23–103 (EAIHCPPCSE…MHGQGVCTEL (81 aa)) enclose the IGFBP N-terminal domain. 6 cysteine pairs are disulfide-bonded: Cys-27/Cys-53, Cys-30/Cys-55, Cys-38/Cys-56, Cys-44/Cys-59, Cys-67/Cys-80, and Cys-74/Cys-100. Asn-125 carries an N-linked (GlcNAc...) asparagine glycan. 4 cysteine pairs are disulfide-bonded: Cys-131–Cys-138, Cys-170–Cys-200, Cys-211–Cys-222, and Cys-224–Cys-245. A Thyroglobulin type-1 domain is found at 167-245 (QGSCQSELHR…GLEPKGELDC (79 aa)). The residue at position 251 (Ser-251) is a Phosphoserine.

Binds IGF2 more than IGF1.

The protein resides in the secreted. In terms of biological role, IGF-binding proteins prolong the half-life of the IGFs and have been shown to either inhibit or stimulate the growth promoting effects of the IGFs on cell culture. They alter the interaction of IGFs with their cell surface receptors. This Mus musculus (Mouse) protein is Insulin-like growth factor-binding protein 4 (Igfbp4).